The primary structure comprises 195 residues: Large ribosomal subunit protein bL17 (195 aa).

The disordered stretch occupies residues 132-195; the sequence is ARGTRFAARK…TEAKDTKPES (64 aa). Residues 159 to 186 are compositionally biased toward low complexity; the sequence is PTAAAVAAEAQAEQPTAEAVAADDAATT.

It belongs to the bacterial ribosomal protein bL17 family. Part of the 50S ribosomal subunit. Contacts protein L32.

The chain is Large ribosomal subunit protein bL17 from Parafrankia sp. (strain EAN1pec).